Reading from the N-terminus, the 340-residue chain is Adenine deaminase (340 aa).

Histidine 17, histidine 19, and histidine 197 together coordinate Zn(2+). Glutamate 200 acts as the Proton donor in catalysis. Aspartate 278 lines the Zn(2+) pocket. Position 279 (aspartate 279) interacts with substrate.

The protein belongs to the metallo-dependent hydrolases superfamily. Adenosine and AMP deaminases family. Adenine deaminase type 2 subfamily. Zn(2+) is required as a cofactor.

The enzyme catalyses adenine + H2O + H(+) = hypoxanthine + NH4(+). Catalyzes the hydrolytic deamination of adenine to hypoxanthine. Plays an important role in the purine salvage pathway and in nitrogen catabolism. The chain is Adenine deaminase from Streptomyces coelicolor (strain ATCC BAA-471 / A3(2) / M145).